The sequence spans 241 residues: uncharacterized protein (241 aa).

Transmembrane regions (helical) follow at residues Leu7 to Phe27, Leu37 to Ile57, Ile72 to Gly92, Ile110 to Phe130, and Phe138 to Ile158.

It localises to the cell membrane. This is an uncharacterized protein from Methanocaldococcus jannaschii (strain ATCC 43067 / DSM 2661 / JAL-1 / JCM 10045 / NBRC 100440) (Methanococcus jannaschii).